A 342-amino-acid chain; its full sequence is NADH-quinone oxidoreductase subunit H 1 (342 aa).

8 consecutive transmembrane segments (helical) span residues 7–27 (FLLE…VIAM), 78–98 (ALFI…GAVI), 120–140 (IGVL…MIGG), 166–186 (MGLS…GEIV), 193–213 (WWNI…SFAE), 245–265 (LFAE…FYFG), 284–304 (ILGT…FMWV), and 322–342 (KIMI…ILLF).

The protein belongs to the complex I subunit 1 family. NDH-1 is composed of 14 different subunits. Subunits NuoA, H, J, K, L, M, N constitute the membrane sector of the complex.

It localises to the cell inner membrane. The catalysed reaction is a quinone + NADH + 5 H(+)(in) = a quinol + NAD(+) + 4 H(+)(out). Its function is as follows. NDH-1 shuttles electrons from NADH, via FMN and iron-sulfur (Fe-S) centers, to quinones in the respiratory chain. The immediate electron acceptor for the enzyme in this species is believed to be ubiquinone. Couples the redox reaction to proton translocation (for every two electrons transferred, four hydrogen ions are translocated across the cytoplasmic membrane), and thus conserves the redox energy in a proton gradient. This subunit may bind ubiquinone. In Cytophaga hutchinsonii (strain ATCC 33406 / DSM 1761 / CIP 103989 / NBRC 15051 / NCIMB 9469 / D465), this protein is NADH-quinone oxidoreductase subunit H 1.